Consider the following 239-residue polypeptide: tRNA (guanine-N(1)-)-methyltransferase (239 aa).

Residues G108 and 127–132 contribute to the S-adenosyl-L-methionine site; that span reads LGDFVL.

The protein belongs to the RNA methyltransferase TrmD family. Homodimer.

It is found in the cytoplasm. It catalyses the reaction guanosine(37) in tRNA + S-adenosyl-L-methionine = N(1)-methylguanosine(37) in tRNA + S-adenosyl-L-homocysteine + H(+). Functionally, specifically methylates guanosine-37 in various tRNAs. The protein is tRNA (guanine-N(1)-)-methyltransferase of Streptococcus pyogenes serotype M6 (strain ATCC BAA-946 / MGAS10394).